We begin with the raw amino-acid sequence, 298 residues long: DNA repair protein RecO (298 aa).

Belongs to the RecO family.

Its function is as follows. Involved in DNA repair and RecF pathway recombination. In Cupriavidus metallidurans (strain ATCC 43123 / DSM 2839 / NBRC 102507 / CH34) (Ralstonia metallidurans), this protein is DNA repair protein RecO.